The primary structure comprises 394 residues: Ribulose bisphosphate carboxylase large chain (394 aa).

At K5 the chain carries N6,N6,N6-trimethyllysine. The substrate site is built by N114 and T164. Catalysis depends on K166, which acts as the Proton acceptor. Residue K168 participates in substrate binding. Mg(2+) is bound by residues K192, D194, and E195. Residue K192 is modified to N6-carboxylysine. Catalysis depends on H285, which acts as the Proton acceptor. Substrate is bound by residues R286, H318, and S370.

Belongs to the RuBisCO large chain family. Type I subfamily. In terms of assembly, heterohexadecamer of 8 large chains and 8 small chains. Requires Mg(2+) as cofactor.

It is found in the plastid. The protein resides in the chloroplast. The enzyme catalyses 2 (2R)-3-phosphoglycerate + 2 H(+) = D-ribulose 1,5-bisphosphate + CO2 + H2O. It carries out the reaction D-ribulose 1,5-bisphosphate + O2 = 2-phosphoglycolate + (2R)-3-phosphoglycerate + 2 H(+). Functionally, ruBisCO catalyzes two reactions: the carboxylation of D-ribulose 1,5-bisphosphate, the primary event in carbon dioxide fixation, as well as the oxidative fragmentation of the pentose substrate in the photorespiration process. Both reactions occur simultaneously and in competition at the same active site. This is Ribulose bisphosphate carboxylase large chain (rbcL) from Euryale ferox (Gorgon plant).